Here is a 146-residue protein sequence, read N- to C-terminus: Large ribosomal subunit protein bL17 (146 aa).

The segment covering glutamate 124 to serine 134 has biased composition (low complexity). The disordered stretch occupies residues glutamate 124 to glutamate 146.

The protein belongs to the bacterial ribosomal protein bL17 family. In terms of assembly, part of the 50S ribosomal subunit. Contacts protein L32.

This is Large ribosomal subunit protein bL17 from Corynebacterium kroppenstedtii (strain DSM 44385 / JCM 11950 / CIP 105744 / CCUG 35717).